Reading from the N-terminus, the 46-residue chain is Homeobox protein Hox-D4 (46 aa).

The segment at residues 1–46 (VNSNYTGGEPKRSRTAYTRQQVLELEKEFLFNRYLTRRRRIQHTLT) is a DNA-binding region (homeobox).

The protein belongs to the Antp homeobox family. Deformed subfamily. Forms a DNA-binding heterodimer with transcription factor PBX1.

It is found in the nucleus. Sequence-specific transcription factor which is part of a developmental regulatory system that provides cells with specific positional identities on the anterior-posterior axis. In Ovis aries (Sheep), this protein is Homeobox protein Hox-D4 (HOXD4).